Consider the following 188-residue polypeptide: Photosystem I assembly protein Ycf4 (188 aa).

2 helical membrane-spanning segments follow: residues 26-48 (FFWA…SSYF) and 63-85 (FIPQ…GYLW).

It belongs to the Ycf4 family.

It is found in the cellular thylakoid membrane. Its function is as follows. Seems to be required for the assembly of the photosystem I complex. This chain is Photosystem I assembly protein Ycf4, found in Synechocystis sp. (strain ATCC 27184 / PCC 6803 / Kazusa).